The sequence spans 492 residues: 3-octaprenyl-4-hydroxybenzoate carboxy-lyase (492 aa).

Asn177 lines the Mn(2+) pocket. Residues 180–182 (IYR), 194–196 (RWL), and 199–200 (RG) each bind prenylated FMN. Glu243 serves as a coordination point for Mn(2+). Catalysis depends on Asp292, which acts as the Proton donor.

Belongs to the UbiD family. As to quaternary structure, homohexamer. Prenylated FMN is required as a cofactor. The cofactor is Mn(2+).

It localises to the cell membrane. It carries out the reaction a 4-hydroxy-3-(all-trans-polyprenyl)benzoate + H(+) = a 2-(all-trans-polyprenyl)phenol + CO2. It functions in the pathway cofactor biosynthesis; ubiquinone biosynthesis. In terms of biological role, catalyzes the decarboxylation of 3-octaprenyl-4-hydroxy benzoate to 2-octaprenylphenol, an intermediate step in ubiquinone biosynthesis. The protein is 3-octaprenyl-4-hydroxybenzoate carboxy-lyase of Neisseria meningitidis serogroup B (strain ATCC BAA-335 / MC58).